We begin with the raw amino-acid sequence, 202 residues long: Small ribosomal subunit protein uS4c (202 aa).

In terms of domain architecture, S4 RNA-binding spans 90–165 (MRLDNILFRL…SQKYKIPNHL (76 aa)).

This sequence belongs to the universal ribosomal protein uS4 family. As to quaternary structure, part of the 30S ribosomal subunit. Contacts protein S5. The interaction surface between S4 and S5 is involved in control of translational fidelity.

Its subcellular location is the plastid. The protein resides in the chloroplast. In terms of biological role, one of the primary rRNA binding proteins, it binds directly to 16S rRNA where it nucleates assembly of the body of the 30S subunit. With S5 and S12 plays an important role in translational accuracy. The protein is Small ribosomal subunit protein uS4c (rps4) of Diphyscium foliosum (Nut-moss).